The chain runs to 107 residues: Guanylin (107 aa).

An N-terminal signal peptide occupies residues 1-20 (MNTFLLSALCLGAWAALVGA). Residues 21–92 (VTVQDGDFSF…LNRLAVIAQD (72 aa)) constitute a propeptide that is removed on maturation. Disulfide bonds link Cys-61–Cys-74, Cys-96–Cys-104, and Cys-99–Cys-107.

Belongs to the guanylin family.

It is found in the secreted. In terms of biological role, endogenous activator of intestinal guanylate cyclase. It stimulates this enzyme through the same receptor binding region as the heat-stable enterotoxins. The sequence is that of Guanylin (GUCA2A) from Cavia porcellus (Guinea pig).